We begin with the raw amino-acid sequence, 209 residues long: ATP-dependent Clp protease proteolytic subunit 2 (209 aa).

Catalysis depends on serine 106, which acts as the Nucleophile. Histidine 131 is an active-site residue.

This sequence belongs to the peptidase S14 family. Fourteen ClpP subunits assemble into 2 heptameric rings which stack back to back to give a disk-like structure with a central cavity, resembling the structure of eukaryotic proteasomes.

Its subcellular location is the cytoplasm. It catalyses the reaction Hydrolysis of proteins to small peptides in the presence of ATP and magnesium. alpha-casein is the usual test substrate. In the absence of ATP, only oligopeptides shorter than five residues are hydrolyzed (such as succinyl-Leu-Tyr-|-NHMec, and Leu-Tyr-Leu-|-Tyr-Trp, in which cleavage of the -Tyr-|-Leu- and -Tyr-|-Trp bonds also occurs).. Its function is as follows. Cleaves peptides in various proteins in a process that requires ATP hydrolysis. Has a chymotrypsin-like activity. Plays a major role in the degradation of misfolded proteins. In Rhizobium etli (strain ATCC 51251 / DSM 11541 / JCM 21823 / NBRC 15573 / CFN 42), this protein is ATP-dependent Clp protease proteolytic subunit 2.